Reading from the N-terminus, the 457-residue chain is Acetylcholine receptor subunit alpha-1-A (457 aa).

An N-terminal signal peptide occupies residues 1 to 20; that stretch reads MDFVLTRLILLFLAATIIYS. Topologically, residues 21–230 are extracellular; that stretch reads SEDESRLIND…ITYHFLLQRL (210 aa). 2 disulfides stabilise this stretch: Cys-148/Cys-162 and Cys-212/Cys-213. Asn-161 carries an N-linked (GlcNAc...) asparagine glycan. Transmembrane regions (helical) follow at residues 231-255, 263-281, and 297-316; these read PLYFIVNVVIPCLLFSFLTGLVFYL, ITLSVSVLLSLVVFLLVIV, and YMLFTMVFVIASIVITVIVI. Over 317–428 the chain is Cytoplasmic; sequence NTHHRSPSTH…WKFVAMVLDH (112 aa). The helical transmembrane segment at 429 to 447 threads the bilayer; the sequence is LLLAVFMIVCIIGTLAIFA.

It belongs to the ligand-gated ion channel (TC 1.A.9) family. Acetylcholine receptor (TC 1.A.9.1) subfamily. Alpha-1/CHRNA1 sub-subfamily. As to quaternary structure, one of the alpha chains that assemble within the acetylcholine receptor, a pentamer of two alpha chains, a beta, a delta, and a gamma or epsilon chains. As to expression, oocytes.

The protein localises to the postsynaptic cell membrane. The protein resides in the cell membrane. The catalysed reaction is K(+)(in) = K(+)(out). It catalyses the reaction Na(+)(in) = Na(+)(out). In terms of biological role, upon acetylcholine binding, the AChR responds by an extensive change in conformation that affects all subunits and leads to opening of an ion-conducting channel across the plasma membrane. This is Acetylcholine receptor subunit alpha-1-A (chrna1-a) from Xenopus laevis (African clawed frog).